A 581-amino-acid polypeptide reads, in one-letter code: Leucine-rich repeat-containing protein 47 (581 aa).

LRR repeat units lie at residues 78–97 (QLHSLVLRRNALGPGLSPEL), 102–123 (ALRVLDLSGNALETLPPGEGLG), 132–154 (QLQSLNLSGNRLRELPADLARCA), 156–177 (RLQSLNLTGNRLDAFPPELFRP), 182–204 (LLSELAAADNCLRELSPDIAHLA), 205–227 (SLKTLDLSNNQLTEIPAELADCP), and 228–248 (KLKEINFRGNRLRDKRLEKMV). Positions 262-301 (AGGRGGRSKGRQEASEKEDRKKRRERKQHRESGEGEEEVA) are disordered. The segment covering 271–280 (GRQEASEKED) has biased composition (basic and acidic residues). Residues Ser-314, Ser-430, and Ser-519 each carry the phosphoserine modification. Residues 401-436 (LGRKEAKAKELVRQLQLEAEEQRKQKKRQSVSGLHR) adopt a coiled-coil conformation.

This is Leucine-rich repeat-containing protein 47 (Lrrc47) from Mus musculus (Mouse).